The chain runs to 741 residues: Transketolase, chloroplastic (741 aa).

The span at 1-19 shows a compositional bias: low complexity; sequence MAASSSLSTLSHHQTLLSH. The interval 1-33 is disordered; the sequence is MAASSSLSTLSHHQTLLSHPKTHLPTTPASSLL. Residues 1–66 constitute a chloroplast transit peptide; sequence MAASSSLSTL…VGSASAVVRA (66 aa). Residues 24 to 33 are compositionally biased toward polar residues; sequence LPTTPASSLL. Histidine 103 serves as a coordination point for substrate. Residues histidine 143 and 192–194 each bind thiamine diphosphate; that span reads GPL. Aspartate 233 is a binding site for Mg(2+). Thiamine diphosphate contacts are provided by glycine 234 and asparagine 263. Residues asparagine 263 and isoleucine 265 each coordinate Mg(2+). Residues histidine 340, arginine 434, and serine 461 each coordinate substrate. Position 340 (histidine 340) interacts with thiamine diphosphate. Thiamine diphosphate contacts are provided by glutamate 488 and phenylalanine 515. Glutamate 488 acts as the Proton donor in catalysis. 3 residues coordinate substrate: histidine 539, aspartate 547, and arginine 598.

It belongs to the transketolase family. As to quaternary structure, homodimer. The cofactor is Mg(2+). Ca(2+) is required as a cofactor. Requires Mn(2+) as cofactor. Co(2+) serves as cofactor. It depends on thiamine diphosphate as a cofactor.

It localises to the plastid. The protein resides in the chloroplast thylakoid membrane. The catalysed reaction is D-sedoheptulose 7-phosphate + D-glyceraldehyde 3-phosphate = aldehydo-D-ribose 5-phosphate + D-xylulose 5-phosphate. It participates in carbohydrate biosynthesis; Calvin cycle. Its function is as follows. Catalyzes the reversible transfer of a two-carbon ketol group from fructose-6-phosphate or sedoheptulose-7-phosphate to glyceraldehyde-3-phosphate to yield xylulose-5-phosphate and erythrose-4-phosphate or ribose-5-phosphate, respectively. The protein is Transketolase, chloroplastic of Spinacia oleracea (Spinach).